A 143-amino-acid polypeptide reads, in one-letter code: Nucleoside diphosphate kinase (143 aa).

ATP-binding residues include K11, F59, R87, T93, R104, and N114. The Pros-phosphohistidine intermediate role is filled by H117.

This sequence belongs to the NDK family. In terms of assembly, homotetramer. It depends on Mg(2+) as a cofactor.

The protein localises to the cytoplasm. The enzyme catalyses a 2'-deoxyribonucleoside 5'-diphosphate + ATP = a 2'-deoxyribonucleoside 5'-triphosphate + ADP. The catalysed reaction is a ribonucleoside 5'-diphosphate + ATP = a ribonucleoside 5'-triphosphate + ADP. In terms of biological role, major role in the synthesis of nucleoside triphosphates other than ATP. The ATP gamma phosphate is transferred to the NDP beta phosphate via a ping-pong mechanism, using a phosphorylated active-site intermediate. The sequence is that of Nucleoside diphosphate kinase from Colwellia psychrerythraea (strain 34H / ATCC BAA-681) (Vibrio psychroerythus).